A 474-amino-acid chain; its full sequence is Siroheme synthase (474 aa).

The segment at 1-203 (MDYLPIFLKL…GRAEDAERVL (203 aa)) is precorrin-2 dehydrogenase /sirohydrochlorin ferrochelatase. NAD(+) is bound by residues 22–23 (EV) and 43–44 (AS). The interval 219 to 474 (GSVALVGAGP…QETEGRSGNG (256 aa)) is uroporphyrinogen-III C-methyltransferase. Proline 228 is an S-adenosyl-L-methionine binding site. Catalysis depends on aspartate 251, which acts as the Proton acceptor. Lysine 273 (proton donor) is an active-site residue. Residues 304–306 (GGD), isoleucine 309, 334–335 (TA), methionine 387, and glycine 416 contribute to the S-adenosyl-L-methionine site.

The protein in the N-terminal section; belongs to the precorrin-2 dehydrogenase / sirohydrochlorin ferrochelatase family. In the C-terminal section; belongs to the precorrin methyltransferase family.

It catalyses the reaction uroporphyrinogen III + 2 S-adenosyl-L-methionine = precorrin-2 + 2 S-adenosyl-L-homocysteine + H(+). The enzyme catalyses precorrin-2 + NAD(+) = sirohydrochlorin + NADH + 2 H(+). The catalysed reaction is siroheme + 2 H(+) = sirohydrochlorin + Fe(2+). It functions in the pathway cofactor biosynthesis; adenosylcobalamin biosynthesis; precorrin-2 from uroporphyrinogen III: step 1/1. Its pathway is cofactor biosynthesis; adenosylcobalamin biosynthesis; sirohydrochlorin from precorrin-2: step 1/1. The protein operates within porphyrin-containing compound metabolism; siroheme biosynthesis; precorrin-2 from uroporphyrinogen III: step 1/1. It participates in porphyrin-containing compound metabolism; siroheme biosynthesis; siroheme from sirohydrochlorin: step 1/1. It functions in the pathway porphyrin-containing compound metabolism; siroheme biosynthesis; sirohydrochlorin from precorrin-2: step 1/1. Its function is as follows. Multifunctional enzyme that catalyzes the SAM-dependent methylations of uroporphyrinogen III at position C-2 and C-7 to form precorrin-2 via precorrin-1. Then it catalyzes the NAD-dependent ring dehydrogenation of precorrin-2 to yield sirohydrochlorin. Finally, it catalyzes the ferrochelation of sirohydrochlorin to yield siroheme. In Methylococcus capsulatus (strain ATCC 33009 / NCIMB 11132 / Bath), this protein is Siroheme synthase.